An 835-amino-acid chain; its full sequence is Protein translocase subunit SecA (835 aa).

Residues Q85, 103-107 (GEGKT), and D492 contribute to the ATP site. Residues C819, C821, C830, and C831 each coordinate Zn(2+).

Belongs to the SecA family. Monomer and homodimer. Part of the essential Sec protein translocation apparatus which comprises SecA, SecYEG and auxiliary proteins SecDF. Other proteins may also be involved. Zn(2+) serves as cofactor.

It localises to the cell membrane. The protein localises to the cytoplasm. It catalyses the reaction ATP + H2O + cellular proteinSide 1 = ADP + phosphate + cellular proteinSide 2.. Part of the Sec protein translocase complex. Interacts with the SecYEG preprotein conducting channel. Has a central role in coupling the hydrolysis of ATP to the transfer of proteins into and across the cell membrane, serving as an ATP-driven molecular motor driving the stepwise translocation of polypeptide chains across the membrane. In Clostridium botulinum (strain Kyoto / Type A2), this protein is Protein translocase subunit SecA.